Here is a 388-residue protein sequence, read N- to C-terminus: MARQDYVFTSESVSEGHPDKLCDQISDAVLDALLAEDPAARVACEAFATTGTVVIGGEIGLSDKKKLGEYMGRIAEIARNTIRDIGYEQEKFHWNTCHVHNYLHEQSAHISQGVDRDGAGDQGIMFGYAVDETPELMPAPIQYAHAILRRLAEARKSGAEPTLGPDAKSQLSLRYENGKPVEITSLVLSHQHKDESQTSDDIRAIVEPYIREVLPAEWLTERTEWWVNPTGTFVIGGPDGDAGLTGRKIIVDTYGGAAPHGGGAFSGKDPTKVDRSAAYAARYLAKNVVAAGLAKRCVIQLSYAIGVAKPLSIYADTFGTSEVPEAEIERAVSRAMDLTPRGIREHLALCRPIYRRTAAYGHFGRAPDADGGFSWERTDLVEAIKREL.

Histidine 17 lines the ATP pocket. Aspartate 19 serves as a coordination point for Mg(2+). Residue glutamate 45 coordinates K(+). L-methionine-binding residues include glutamate 58 and glutamine 106. The tract at residues 106 to 116 (QSAHISQGVDR) is flexible loop. ATP contacts are provided by residues 166–168 (DAK), aspartate 241, 247–248 (RK), alanine 264, and lysine 268. Residue aspartate 241 participates in L-methionine binding. Lysine 272 contacts L-methionine.

Belongs to the AdoMet synthase family. In terms of assembly, homotetramer; dimer of dimers. The cofactor is Mg(2+). It depends on K(+) as a cofactor.

It localises to the cytoplasm. The enzyme catalyses L-methionine + ATP + H2O = S-adenosyl-L-methionine + phosphate + diphosphate. It participates in amino-acid biosynthesis; S-adenosyl-L-methionine biosynthesis; S-adenosyl-L-methionine from L-methionine: step 1/1. In terms of biological role, catalyzes the formation of S-adenosylmethionine (AdoMet) from methionine and ATP. The overall synthetic reaction is composed of two sequential steps, AdoMet formation and the subsequent tripolyphosphate hydrolysis which occurs prior to release of AdoMet from the enzyme. This Paracoccus denitrificans (strain Pd 1222) protein is S-adenosylmethionine synthase.